The following is a 120-amino-acid chain: Ribonuclease P protein component (120 aa).

Belongs to the RnpA family. In terms of assembly, consists of a catalytic RNA component (M1 or rnpB) and a protein subunit.

The catalysed reaction is Endonucleolytic cleavage of RNA, removing 5'-extranucleotides from tRNA precursor.. RNaseP catalyzes the removal of the 5'-leader sequence from pre-tRNA to produce the mature 5'-terminus. It can also cleave other RNA substrates such as 4.5S RNA. The protein component plays an auxiliary but essential role in vivo by binding to the 5'-leader sequence and broadening the substrate specificity of the ribozyme. The protein is Ribonuclease P protein component of Dehalococcoides mccartyi (strain ATCC BAA-2266 / KCTC 15142 / 195) (Dehalococcoides ethenogenes (strain 195)).